The chain runs to 405 residues: Putative polysaccharide ligase RP358 (405 aa).

10 helical membrane passes run 23–43 (IAAT…ISFI), 77–97 (LFTA…NSLV), 120–140 (VLYI…LFFI), 156–178 (FGLY…AIII), 201–221 (ISDS…FILA), 227–247 (IFFK…PVIA), 270–290 (LFIW…GYGF), 322–342 (ILQI…CLVY), 353–375 (VSNF…MISY), and 377–397 (IWQT…KLLV).

The protein belongs to the O-antigen ligase family.

Its subcellular location is the membrane. This Rickettsia prowazekii (strain Madrid E) protein is Putative polysaccharide ligase RP358.